Consider the following 678-residue polypeptide: Ribosome biogenesis protein BOP1 homolog (678 aa).

Basic and acidic residues predominate over residues 1 to 10 (MGHSDGDHGS). The segment at 1 to 73 (MGHSDGDHGS…VAPRNTIGDV (73 aa)) is disordered. Acidic residues predominate over residues 24–63 (WSDDDDEGSLSFEDSGEGSDAESDEPDAPAVEESDSSEDE). 7 WD repeats span residues 343 to 384 (GHNG…KVWN), 386 to 424 (GGVVHRIAWNPSPDRHILAAVVDHDLLLLNAEVGDEDAQ), 463 to 505 (IHHK…SHHP), 508 to 548 (KLPG…KKLE), 549 to 588 (SGVREISSISIHPGGDNVIVGSKDGKLCWFDTDLSTRPYK), 592 to 631 (NHSKDITNVTFHRKYPLFASSSEDCTAYVFHGMVYSDLNQ), and 647 to 678 (SDGRGVLDCKFHPRQPWLFTAGADSVVRLYCD).

The protein belongs to the WD repeat BOP1/ERB1 family.

It is found in the nucleus. The protein resides in the nucleolus. It localises to the nucleoplasm. In terms of biological role, required for maturation of ribosomal RNAs and formation of the large ribosomal subunit. This chain is Ribosome biogenesis protein BOP1 homolog, found in Oryza sativa subsp. japonica (Rice).